We begin with the raw amino-acid sequence, 215 residues long: MTQSLADMRRDYTRDGLTEAQAPAEPFALFHQWFAEAVKTEQAPVEANAMTLATVDADGRPHCRILLLKGLDEQGFTFFTNYESAKGQHLAANPFAAMTFFWPTLERQVRIEGRVVKVTPEESDAYYQVRPLGSRLGAWASPQSRVINGRGELEDLLKATEQRFTDTQPHCPEHWGGYRLLPERVEFWQGRASRLHDRLNYRVQGADWILERLAP.

Residues 9-12 and lysine 69 contribute to the substrate site; that span reads RRDY. Residues 64-69, 79-80, lysine 86, and glutamine 108 each bind FMN; these read RILLLK and FT. 3 residues coordinate substrate: tyrosine 126, arginine 130, and serine 134. Residues 143–144 and tryptophan 188 contribute to the FMN site; that span reads QS. Position 194 to 196 (194 to 196) interacts with substrate; that stretch reads RLH. Residue arginine 198 participates in FMN binding.

The protein belongs to the pyridoxamine 5'-phosphate oxidase family. As to quaternary structure, homodimer. The cofactor is FMN.

It catalyses the reaction pyridoxamine 5'-phosphate + O2 + H2O = pyridoxal 5'-phosphate + H2O2 + NH4(+). The enzyme catalyses pyridoxine 5'-phosphate + O2 = pyridoxal 5'-phosphate + H2O2. It participates in cofactor metabolism; pyridoxal 5'-phosphate salvage; pyridoxal 5'-phosphate from pyridoxamine 5'-phosphate: step 1/1. The protein operates within cofactor metabolism; pyridoxal 5'-phosphate salvage; pyridoxal 5'-phosphate from pyridoxine 5'-phosphate: step 1/1. Its function is as follows. Catalyzes the oxidation of either pyridoxine 5'-phosphate (PNP) or pyridoxamine 5'-phosphate (PMP) into pyridoxal 5'-phosphate (PLP). This is Pyridoxine/pyridoxamine 5'-phosphate oxidase from Pseudomonas fluorescens (strain Pf0-1).